The sequence spans 427 residues: Inorganic pyrophosphatase 1 (427 aa).

A compositionally biased stretch (low complexity) spans 36–52 (SSSSNTATTSTSSSNTS). Disordered stretches follow at residues 36-63 (SSSSNTATTSTSSSNTSQKWATSRTSRP) and 77-118 (SMDS…RSLH). Composition is skewed to polar residues over residues 53–63 (QKWATSRTSRP) and 77–114 (SMDSGSSTVQLPSPRGSLTTAVSTSSSGAQRQMSANSE). Mg(2+) is bound by residues Asp259, Asp264, and Asp296.

The protein belongs to the PPase family. Requires Mg(2+) as cofactor. In terms of tissue distribution, expressed in coelomocytes, the intestine and in the nervous system including the nerve cords and sensory neurons.

Its subcellular location is the cytoplasm. It carries out the reaction diphosphate + H2O = 2 phosphate + H(+). In terms of biological role, catalyzes the hydrolysis of inorganic pyrophosphate (PPi) forming two phosphate ions. Plays a role in intestinal development and subsequent normal secretory, digestive and absorption functions. Required for larval development. The polypeptide is Inorganic pyrophosphatase 1 (Caenorhabditis elegans).